The chain runs to 88 residues: Centromere protein W (88 aa).

Belongs to the CENP-W/WIP1 family. Heterodimer with CENPT; this dimer coassembles with CENPS-CENPX heterodimers at centromeres to form the tetrameric CENP-T-W-S-X complex, which is a subcomplex of the large constitutive centromere-associated network (CCAN, also known as the interphase centromere complex or ICEN). Interacts with NPM1. In terms of tissue distribution, highly expressed in ovary, liver, lung and pancreas and to a lower extent in breast and gastrointestinal tract cancers; such as those of the colon, rectum and stomach. Overexpressed in high grade breast invasive tumors. Expressed in many cancer cell types.

It localises to the nucleus. The protein resides in the chromosome. The protein localises to the centromere. It is found in the kinetochore. Its subcellular location is the nucleus matrix. It localises to the nucleolus. Component of the CENPA-NAC (nucleosome-associated) complex, a complex that plays a central role in assembly of kinetochore proteins, mitotic progression and chromosome segregation. The CENPA-NAC complex recruits the CENPA-CAD (nucleosome distal) complex and may be involved in incorporation of newly synthesized CENPA into centromeres. Part of a nucleosome-associated complex that binds specifically to histone H3-containing nucleosomes at the centromere, as opposed to nucleosomes containing CENPA. Component of the heterotetrameric CENP-T-W-S-X complex that binds and supercoils DNA, and plays an important role in kinetochore assembly. CENPW has a fundamental role in kinetochore assembly and function. It is one of the inner kinetochore proteins, with most further proteins binding downstream. Required for normal chromosome organization and normal progress through mitosis. This chain is Centromere protein W (CENPW), found in Homo sapiens (Human).